The sequence spans 268 residues: Imidazole glycerol phosphate synthase subunit HisF (268 aa).

Catalysis depends on residues D12 and D131.

It belongs to the HisA/HisF family. In terms of assembly, heterodimer of HisH and HisF.

Its subcellular location is the cytoplasm. It catalyses the reaction 5-[(5-phospho-1-deoxy-D-ribulos-1-ylimino)methylamino]-1-(5-phospho-beta-D-ribosyl)imidazole-4-carboxamide + L-glutamine = D-erythro-1-(imidazol-4-yl)glycerol 3-phosphate + 5-amino-1-(5-phospho-beta-D-ribosyl)imidazole-4-carboxamide + L-glutamate + H(+). The protein operates within amino-acid biosynthesis; L-histidine biosynthesis; L-histidine from 5-phospho-alpha-D-ribose 1-diphosphate: step 5/9. Functionally, IGPS catalyzes the conversion of PRFAR and glutamine to IGP, AICAR and glutamate. The HisF subunit catalyzes the cyclization activity that produces IGP and AICAR from PRFAR using the ammonia provided by the HisH subunit. The protein is Imidazole glycerol phosphate synthase subunit HisF of Methanoregula boonei (strain DSM 21154 / JCM 14090 / 6A8).